Reading from the N-terminus, the 332-residue chain is 5-dehydro-2-deoxygluconokinase 1 (332 aa).

This sequence belongs to the carbohydrate kinase PfkB family.

It carries out the reaction 5-dehydro-2-deoxy-D-gluconate + ATP = 6-phospho-5-dehydro-2-deoxy-D-gluconate + ADP + H(+). The protein operates within polyol metabolism; myo-inositol degradation into acetyl-CoA; acetyl-CoA from myo-inositol: step 5/7. Its function is as follows. Catalyzes the phosphorylation of 5-dehydro-2-deoxy-D-gluconate (2-deoxy-5-keto-D-gluconate or DKG) to 6-phospho-5-dehydro-2-deoxy-D-gluconate (DKGP). This chain is 5-dehydro-2-deoxygluconokinase 1, found in Bacillus cereus (strain ZK / E33L).